The chain runs to 123 residues: DNA-directed RNA polymerase subunit omega (123 aa).

Residues 67–123 (EESAADSLSLGGFSTADVEAEVGGGPVQPDPGASQERAFDEAADGTAQGSGDPDPTT) are disordered.

The protein belongs to the RNA polymerase subunit omega family. As to quaternary structure, the RNAP catalytic core consists of 2 alpha, 1 beta, 1 beta' and 1 omega subunit. When a sigma factor is associated with the core the holoenzyme is formed, which can initiate transcription.

It carries out the reaction RNA(n) + a ribonucleoside 5'-triphosphate = RNA(n+1) + diphosphate. Its function is as follows. Promotes RNA polymerase assembly. Latches the N- and C-terminal regions of the beta' subunit thereby facilitating its interaction with the beta and alpha subunits. The chain is DNA-directed RNA polymerase subunit omega from Halorhodospira halophila (strain DSM 244 / SL1) (Ectothiorhodospira halophila (strain DSM 244 / SL1)).